Here is a 62-residue protein sequence, read N- to C-terminus: Regulator of rDNA transcription protein 15 (62 aa).

Belongs to the ART2/RRT15 family.

In terms of biological role, involved in modulation of rDNA transcription. The sequence is that of Regulator of rDNA transcription protein 15 (RRT15) from Saccharomyces cerevisiae (strain ATCC 204508 / S288c) (Baker's yeast).